Here is a 1068-residue protein sequence, read N- to C-terminus: Rho family-interacting cell polarization regulator 2 (1068 aa).

Phosphoserine; in isoform occurs at positions 21 and 37. Residues 45–73 are disordered; sequence LKKPQAKLKKMHNLGHKNNNPPKEPQPKR. Over residues 48–59 the composition is skewed to basic residues; that stretch reads PQAKLKKMHNLG. Residues 55–113 are involved in cell filopodia formation; sequence MHNLGHKNNNPPKEPQPKRVEEVYRALKNGLDEYLEVHQTELDKLTAQLKDMKRNSRLG. Residues 83 to 112 adopt a coiled-coil conformation; sequence NGLDEYLEVHQTELDKLTAQLKDMKRNSRL. At Ser-341 the chain carries Phosphoserine; in isoform 2. A compositionally biased stretch (polar residues) spans 474-491; that stretch reads QNEGMDDTSSASSRNSLG. The tract at residues 474–524 is disordered; sequence QNEGMDDTSSASSRNSLGEGQEPKSHLKEEDPEEPRKPASAPSEACRRQSS. Over residues 494-510 the composition is skewed to basic and acidic residues; sequence QEPKSHLKEEDPEEPRK. Ser-523 is modified (phosphoserine; in isoform 2). Phosphoserine is present on Ser-573. Phosphoserine; in isoform 2 is present on Ser-585. A coiled-coil region spans residues 768–793; the sequence is VARSLLEKLSRQIQVMEKLAAVSDEN.

This sequence belongs to the RIPOR family. In terms of assembly, homooligomer; homooligomerization is regulated by RHOC and leads to the formation of concatemers through the association of N- and C-termini. Interacts with 14-3-3 proteins; these interactions occur during myogenic cell differentiation. Interacts with HDAC6; this interaction occurs during early myogenic differentiation and prevents HDAC6 to deacetylate tubulin. Interacts with DYSF; this interaction occurs during early myogenic differentiation. Interacts with MYOF. Interacts with RHOC. Isoform 1 and isoform 2 interact (via active GTP- or inactive GDP-bound forms) with RHOA; these interactions are direct, block the loading of GTP to RHOA and decrease upon chemokine CCL19 stimulation in primary T lymphocytes. Isoform 2 interacts (phosphorylated form) with HDAC6; this interaction induces T cell proliferation arrest. Isoform 2 interacts (phosphorylated form) with 14-3-3 proteins; these interactions induces T cell proliferation arrest. Isoform 2 interacts with 14-3-3 proteins. Isoform 2 interacts (via phosphorylated form) with YWHAB; this interaction occurs in a chemokine-dependent manner and does not compete for binding of RIPOR2 with RHOA nor blocks inhibition of RIPOR2-mediated RHOA activity. Isoform 2 interacts with YWHAE. Isoform 2 interacts with YWHAQ. In terms of processing, phosphorylated. Isoform 2 is phosphorylated in T cells. Chemokine-induced phosphorylation of isoform 2 in neutrophils occurs in a PKC- and AKT-dependent manner, resulting in RIPOR2 interaction with YWHAB and stabilization. Isoform 2 is phosphorylated by PKCA, AKT1 and MAPKAPK1A; in vitro. Acetylated during myogenic differentiation. As to expression, expressed in primary fetal mononuclear myoblast. Expressed strongly in naive T lymphocytes. Expressed weakly in activated T lymphocytes (at protein level). Expressed in blood cells and adult tissues of hematopoietic origin, such as the secondary lymphoid organs. Expressed in cytotrophoblast.

It localises to the cytoplasm. It is found in the cytoskeleton. The protein resides in the cell projection. The protein localises to the filopodium. Its subcellular location is the stereocilium. It localises to the stereocilium membrane. It is found in the apical cell membrane. Its function is as follows. Acts as an inhibitor of the small GTPase RHOA and plays several roles in the regulation of myoblast and hair cell differentiation, lymphocyte T proliferation and neutrophil polarization. Inhibits chemokine-induced T lymphocyte responses, such as cell adhesion, polarization and migration. Involved also in the regulation of neutrophil polarization, chemotaxis and adhesion. Required for normal development of inner and outer hair cell stereocilia within the cochlea of the inner ear. Plays a role for maintaining the structural organization of the basal domain of stereocilia. Involved in mechanosensory hair cell function. Required for normal hearing. In terms of biological role, acts as an inhibitor of the small GTPase RHOA. Plays a role in fetal mononuclear myoblast differentiation by promoting filopodia and myotube formation. Maintains naive T lymphocytes in a quiescent state. This Homo sapiens (Human) protein is Rho family-interacting cell polarization regulator 2 (RIPOR2).